Reading from the N-terminus, the 62-residue chain is Photosystem II reaction center protein Z (62 aa).

2 helical membrane passes run 8–28 (AVFALIVTSFLLVIGVPVVLA) and 41–61 (FSGASLWIGLVFLVGILNSFV).

This sequence belongs to the PsbZ family. As to quaternary structure, PSII is composed of 1 copy each of membrane proteins PsbA, PsbB, PsbC, PsbD, PsbE, PsbF, PsbH, PsbI, PsbJ, PsbK, PsbL, PsbM, PsbT, PsbY, PsbZ, Psb30/Ycf12, at least 3 peripheral proteins of the oxygen-evolving complex and a large number of cofactors. It forms dimeric complexes.

The protein resides in the plastid. It is found in the chloroplast thylakoid membrane. May control the interaction of photosystem II (PSII) cores with the light-harvesting antenna, regulates electron flow through the 2 photosystem reaction centers. PSII is a light-driven water plastoquinone oxidoreductase, using light energy to abstract electrons from H(2)O, generating a proton gradient subsequently used for ATP formation. This Zygnema circumcarinatum (Green alga) protein is Photosystem II reaction center protein Z.